Reading from the N-terminus, the 146-residue chain is HTH-type transcriptional regulator FarR (146 aa).

The 133-residue stretch at 7 to 139 folds into the HTH marR-type domain; the sequence is HASINIGLIQ…LKDLLAELAK (133 aa). The segment at residues 53-76 is a DNA-binding region (H-T-H motif); sequence FQDLANQACILRPSLTGILTRLEK.

Repressor activity requires the presence of the Integration Host Factor (IHF), which binds to sequences located between FarR binding sites A and C. IHF binding to the promoter region stabilizes the binding of FarR to its binding sites A and C and as a consequence, enhances repression of the farAB operon. Its function is as follows. Negatively controls expression of the farAB operon by binding directly to the farAB promoter region. Binds to three sites (sites A, B and C) within the DNA sequence upstream of farA. Also represses its own expression. This is HTH-type transcriptional regulator FarR from Neisseria gonorrhoeae.